Reading from the N-terminus, the 262-residue chain is 5'-nucleotidase SurE (262 aa).

A divalent metal cation is bound by residues Asp8, Asp9, Ser40, and Asn92.

This sequence belongs to the SurE nucleotidase family. Requires a divalent metal cation as cofactor.

It is found in the cytoplasm. It catalyses the reaction a ribonucleoside 5'-phosphate + H2O = a ribonucleoside + phosphate. Its function is as follows. Nucleotidase that shows phosphatase activity on nucleoside 5'-monophosphates. In Xylella fastidiosa (strain 9a5c), this protein is 5'-nucleotidase SurE.